A 450-amino-acid chain; its full sequence is Exodeoxyribonuclease 7 large subunit (450 aa).

It belongs to the XseA family. Heterooligomer composed of large and small subunits.

It is found in the cytoplasm. It carries out the reaction Exonucleolytic cleavage in either 5'- to 3'- or 3'- to 5'-direction to yield nucleoside 5'-phosphates.. Functionally, bidirectionally degrades single-stranded DNA into large acid-insoluble oligonucleotides, which are then degraded further into small acid-soluble oligonucleotides. The protein is Exodeoxyribonuclease 7 large subunit of Listeria innocua serovar 6a (strain ATCC BAA-680 / CLIP 11262).